The following is a 67-amino-acid chain: Large ribosomal subunit protein bL35 (67 aa).

Over residues 1-16 (MPKMKTKSSAKKRFRV) the composition is skewed to basic residues. Residues 1–24 (MPKMKTKSSAKKRFRVRPGGTVKR) form a disordered region.

Belongs to the bacterial ribosomal protein bL35 family.

The polypeptide is Large ribosomal subunit protein bL35 (Verminephrobacter eiseniae (strain EF01-2)).